Reading from the N-terminus, the 371-residue chain is Mitogen-activated protein kinase homolog NTF6 (371 aa).

The 287-residue stretch at 38–324 folds into the Protein kinase domain; sequence IPPIQPVGRG…VEDALNHPFL (287 aa). Residues 44–52 and lysine 67 each bind ATP; that span reads VGRGAYGMV. The active-site Proton acceptor is the aspartate 164. Threonine 196 carries the phosphothreonine modification. The TXY signature appears at 196–198; sequence TEY. Tyrosine 198 bears the Phosphotyrosine mark.

Belongs to the protein kinase superfamily. CMGC Ser/Thr protein kinase family. MAP kinase subfamily. It depends on Mg(2+) as a cofactor. Post-translationally, dually phosphorylated on Thr-196 and Tyr-198, which activates the enzyme. Very low autophosphorylation, although dramatically increased when Mn(2+) is added to the reaction instead of Mg(2+).

It catalyses the reaction L-seryl-[protein] + ATP = O-phospho-L-seryl-[protein] + ADP + H(+). The enzyme catalyses L-threonyl-[protein] + ATP = O-phospho-L-threonyl-[protein] + ADP + H(+). Activated by tyrosine and threonine phosphorylation. The sequence is that of Mitogen-activated protein kinase homolog NTF6 (NTF6) from Nicotiana tabacum (Common tobacco).